The following is a 167-amino-acid chain: UPF0587 protein F46B6.12 (167 aa).

Zn(2+)-binding residues include C34, C37, C68, and C71.

The protein belongs to the UPF0587 family.

This is UPF0587 protein F46B6.12 from Caenorhabditis elegans.